The chain runs to 251 residues: Probable transcriptional regulatory protein MAB_2888c (251 aa).

The disordered stretch occupies residues 1 to 20 (MSGHSKWATTKHQKAVKDAR).

This sequence belongs to the TACO1 family.

Its subcellular location is the cytoplasm. The protein is Probable transcriptional regulatory protein MAB_2888c of Mycobacteroides abscessus (strain ATCC 19977 / DSM 44196 / CCUG 20993 / CIP 104536 / JCM 13569 / NCTC 13031 / TMC 1543 / L948) (Mycobacterium abscessus).